A 433-amino-acid polypeptide reads, in one-letter code: MKSNLKHQSNDPNCKGVEILSIGTELLLGNIVNTNAQWISEELSTLGLNHFRQSTIGDNSERISKLIKEISSRSNLLITTGGLGPTPDDLTTEAIAKSFNATLSERGYLWDQIKKKLSISGSNFDRSSLKKQCFFPKDAQIINNPRGTAPGMIWKPIEGFTILTFPGVPSEMKEMWKETAVNYIKSNFSDGYIFFSNTLKFSGIGESTISEKINNLLKLKNPTVAPYANLGEVKLRLTARAKNELEARKIINPVKEKLKKEFSKFIFGEDDDNLSSVLIKELLKRKESLVFAESCTGGLLSSSITSIPGSSQVFKGSIISYSNNLKQSLLSVPENLIKKFGAVSEEVAETMAINAKEKLNSDWSIAISGIAGPSGGNKEKPVGLVYISIAGPNGHLTNIKKIFSSTRNRIEIQRLSVNVCLNSFRLILLSSSK.

This sequence belongs to the CinA family.

This Prochlorococcus marinus subsp. pastoris (strain CCMP1986 / NIES-2087 / MED4) protein is CinA-like protein.